Reading from the N-terminus, the 95-residue chain is MSCYTAILKSVGGLALFQDANGAIDLCRHFFMYFCEQKLRPNSFWFVVVRAIASMIMYLVLGIALLYISEQDDKKNTNNASNSNKLNESSINSNS.

Positions 1–22 (MSCYTAILKSVGGLALFQDANG) are cleaved as a signal peptide. Over 23–45 (AIDLCRHFFMYFCEQKLRPNSFW) the chain is Intravirion. A helical membrane pass occupies residues 46–66 (FVVVRAIASMIMYLVLGIALL). Residues 67–83 (YISEQDDKKNTNNASNS) are Virion surface-facing. The segment at 76 to 95 (NTNNASNSNKLNESSINSNS) is disordered. Low complexity predominate over residues 77–95 (TNNASNSNKLNESSINSNS). N-linked (GlcNAc...) asparagine; by host glycans are attached at residues Asn79 and Asn87.

Belongs to the oerthopoxvirus OPG135 family.

The protein resides in the virion membrane. The protein localises to the host cytoplasm. Envelope protein. Required for an early step in virion morphogenesis. The protein is Virion membrane protein OPG135 (OPG135) of Homo sapiens (Human).